The primary structure comprises 477 residues: Adenylyl cyclase-associated protein 2 (477 aa).

An N-acetylalanine modification is found at alanine 2. Disordered regions lie at residues 225–261 (LSSGPGLPPPPPPLPPPGPPPLFENEGKKEESSPSRS) and 274–321 (TKGL…SQKH). Over residues 230 to 246 (GLPPPPPPLPPPGPPPL) the composition is skewed to pro residues. Residues 298 to 320 (QTQSPTKSHTPSPTSPKSYPSQK) are compositionally biased toward low complexity. A phosphoserine mark is found at serine 301 and serine 309. Residues 317–455 (PSQKHAPVLE…QDGDYREFPI (139 aa)) enclose the C-CAP/cofactor C-like domain.

Belongs to the CAP family.

It localises to the cell membrane. Involved in the regulation of actin polymerization. The polypeptide is Adenylyl cyclase-associated protein 2 (CAP2) (Homo sapiens (Human)).